A 404-amino-acid chain; its full sequence is F-box only protein 12 (404 aa).

Positions 1–44 (MKNSIPIDLIYEILSRLPAKSVARCRCVSKRWRSILRHQVFTEL) constitute an F-box domain. Residues 383–403 (LAILFCLFFLLFNYLIRLCWV) traverse the membrane as a helical segment.

The protein localises to the membrane. The chain is F-box only protein 12 (FBX12) from Arabidopsis thaliana (Mouse-ear cress).